Consider the following 192-residue polypeptide: Ubiquitin-conjugating enzyme E2 1 (192 aa).

The interval 1-28 (MTTPSRRRLMRDFKKLQEDPPAGVSGAP) is disordered. The region spanning 4 to 150 (PSRRRLMRDF…VQQIVEQSWL (147 aa)) is the UBC core domain. The active-site Glycyl thioester intermediate is Cys88. Residues 171-192 (AAPGANDADDDRMDEGASGSNA) form a disordered region.

Belongs to the ubiquitin-conjugating enzyme family. Interacts with ubr-1 and rfp-1. Interacts with ubc-13.

It carries out the reaction S-ubiquitinyl-[E1 ubiquitin-activating enzyme]-L-cysteine + [E2 ubiquitin-conjugating enzyme]-L-cysteine = [E1 ubiquitin-activating enzyme]-L-cysteine + S-ubiquitinyl-[E2 ubiquitin-conjugating enzyme]-L-cysteine.. It functions in the pathway protein modification; protein ubiquitination. Its function is as follows. Catalyzes the covalent attachment of ubiquitin to other proteins. This is Ubiquitin-conjugating enzyme E2 1 (ubc-1) from Caenorhabditis elegans.